The sequence spans 99 residues: Aspartyl/glutamyl-tRNA(Asn/Gln) amidotransferase subunit C (99 aa).

This sequence belongs to the GatC family. In terms of assembly, heterotrimer of A, B and C subunits.

It catalyses the reaction L-glutamyl-tRNA(Gln) + L-glutamine + ATP + H2O = L-glutaminyl-tRNA(Gln) + L-glutamate + ADP + phosphate + H(+). The enzyme catalyses L-aspartyl-tRNA(Asn) + L-glutamine + ATP + H2O = L-asparaginyl-tRNA(Asn) + L-glutamate + ADP + phosphate + 2 H(+). In terms of biological role, allows the formation of correctly charged Asn-tRNA(Asn) or Gln-tRNA(Gln) through the transamidation of misacylated Asp-tRNA(Asn) or Glu-tRNA(Gln) in organisms which lack either or both of asparaginyl-tRNA or glutaminyl-tRNA synthetases. The reaction takes place in the presence of glutamine and ATP through an activated phospho-Asp-tRNA(Asn) or phospho-Glu-tRNA(Gln). This chain is Aspartyl/glutamyl-tRNA(Asn/Gln) amidotransferase subunit C, found in Polaromonas naphthalenivorans (strain CJ2).